We begin with the raw amino-acid sequence, 336 residues long: Glucokinase (336 aa).

An ATP-binding site is contributed by 12 to 17; the sequence is ADIGGT.

Belongs to the bacterial glucokinase family.

The protein localises to the cytoplasm. The enzyme catalyses D-glucose + ATP = D-glucose 6-phosphate + ADP + H(+). This is Glucokinase from Helicobacter pylori (strain ATCC 700392 / 26695) (Campylobacter pylori).